The sequence spans 462 residues: Cysteine--tRNA ligase (462 aa).

A Zn(2+)-binding site is contributed by Cys27. Positions 29–39 match the 'HIGH' region motif; the sequence is PTVYDLAHIGN. Residues Cys211, His236, and Glu240 each contribute to the Zn(2+) site. Residues 270-274 carry the 'KMSKS' region motif; sequence KMSKS. Lys273 is a binding site for ATP.

It belongs to the class-I aminoacyl-tRNA synthetase family. As to quaternary structure, monomer. Zn(2+) serves as cofactor.

It is found in the cytoplasm. It carries out the reaction tRNA(Cys) + L-cysteine + ATP = L-cysteinyl-tRNA(Cys) + AMP + diphosphate. In Anaplasma phagocytophilum (strain HZ), this protein is Cysteine--tRNA ligase.